Consider the following 102-residue polypeptide: MKLTTEQKVAIREILKTKLSMGVSNVVFEKSDGTIRTMKGTRDADFMPTMQTGKLTESTRKESTDMIPVFDVELGAWRGFSIDKLISVNGMKVEHLLQFIGK.

This is an uncharacterized protein from Enterobacteria phage T4 (Bacteriophage T4).